The primary structure comprises 551 residues: Ubiquitin domain-containing protein DSK2b (551 aa).

The Ubiquitin-like domain occupies 18-93 (VAVNIRCSNG…IHMVRGSAPS (76 aa)). Residues 88–127 (RGSAPSSAPPPAPAASQTTAPSVTRGVGSDNSSNLGGASP) form a disordered region. 2 STI1 domains span residues 143-184 (GNAM…QNLM) and 197-236 (NPQMRELVDRNPELGHVLNDPSILRQTLEAARNPELMREM). Positions 294–319 (QGVTTQGSDASNNSSTPNAGTGTIPN) are enriched in polar residues. The disordered stretch occupies residues 294–336 (QGVTTQGSDASNNSSTPNAGTGTIPNANPLPNPWGATGGQTTA). 2 consecutive STI1 domains span residues 373 to 410 (SPLGATPDASQLSQLLQNPAISQMMQSVFSNPQYMNQL) and 414 to 449 (NPQLRSMLDSNPQLREMMQNPDFLRQFSSPEMMQQM). The tract at residues 455–475 (SLSQNRNTASQDAGQTGAATG) is disordered. Over residues 465–475 (QDAGQTGAATG) the composition is skewed to low complexity. Positions 504–548 (PPEERYATQLQQLQEMGFYDRAENIRALLATNGNVNAAVERLLGS) constitute a UBA domain.

In terms of assembly, interacts with 'Lys-48'-linked polyubiquitin chains via its UBA domain. Interacts with RPN10 via its ubiquitin-like domain. Interacts with PEX2 and PEX12. Ubiquitous.

Its subcellular location is the nucleus. The protein localises to the cytoplasm. Its function is as follows. Binds and presumably selects ubiquitin-conjugates for destruction. Prefers multiubiquitin chains rather than single ubiquitins, with a binding affinity for 'Lys-48'-linked ubiquitin chains. Acts as a ubiquitin receptor that associates with the 26S proteasomal docking subunit RPN10 for the indirect recognition of ubiquitinated substrates of ubiquitin/26S proteasome-mediated proteolysis (UPP). This is Ubiquitin domain-containing protein DSK2b (DSK2B) from Arabidopsis thaliana (Mouse-ear cress).